The chain runs to 542 residues: Sodium/hydrogen exchanger 8 (542 aa).

11 consecutive transmembrane segments (helical) span residues 55-75 (EQSS…CIIL), 79-99 (LIRY…LGIL), 118-138 (EEMF…IFES), 151-171 (IGSI…VVGG), 186-206 (NMTD…VATI), 256-276 (TFLQ…ALGT), 306-326 (AYLP…VFAF), 349-369 (LVLF…NFFR), 374-394 (TPKM…PYAL), 412-432 (TTIV…MPLI), and 446-466 (NKKD…ESEH). Threonine 471 carries the post-translational modification Phosphothreonine. Residues serine 532 and serine 534 each carry the phosphoserine modification.

This sequence belongs to the monovalent cation:proton antiporter 1 (CPA1) transporter (TC 2.A.36) family.

Its subcellular location is the golgi apparatus membrane. It is found in the golgi apparatus. The protein resides in the trans-Golgi network membrane. It localises to the endosome. The protein localises to the multivesicular body membrane. Its subcellular location is the apical cell membrane. It is found in the cytoplasmic vesicle. The protein resides in the secretory vesicle. It localises to the acrosome. The catalysed reaction is Na(+)(in) + H(+)(out) = Na(+)(out) + H(+)(in). Functionally, na(+)/H(+) antiporter. Mediates the electoneutral exchange of intracellular H(+) ions for extracellular Na(+) in 1:1 stoichiometry. Acts as an Na(+)/H(+) exchanger in the trans-Golgi. Contributes to the regulation of pH regulation of Golgi apparatus, and consequently, in protein trafficking and endosomal morphology. In germ cells, plays a crucial role in acrosome biogenesis and sperm development, probably by playing a role in the fusion of the Golgi-derived vesicles that form the acrosomal cap. Can also be active at the cell surface of specialized cells. In the small intestine, at the cell membrane, plays a major physiological role in transepithelial absorption of Na(+) and regulates intracellular pH homeostasis of intestinal epithelial cells. Acts as an important regulator of mucosal integrity in the intestine and in the stomach, could mediate the pH fluctuation necessary for mucin exocytosis or assist membrane trafficking of other proteins. Plays a role in photoreceptor survival and in the maintenance of intracellular pH homeostasis in retinal pigment epithelium (RPE cells). This Macaca fascicularis (Crab-eating macaque) protein is Sodium/hydrogen exchanger 8 (SLC9A8).